We begin with the raw amino-acid sequence, 77 residues long: Defensin-like protein 4 (77 aa).

The first 30 residues, 1 to 30, serve as a signal peptide directing secretion; sequence MKFSMRLISAVLFLVMIFVATGMGPVTVEA. Disulfide bonds link Cys-33/Cys-77, Cys-44/Cys-64, Cys-50/Cys-71, and Cys-54/Cys-73.

The protein belongs to the DEFL family. In terms of tissue distribution, expressed in roots, siliques and seeds.

It localises to the secreted. Confers broad-spectrum resistance to pathogens. The sequence is that of Defensin-like protein 4 (PDF2.1) from Arabidopsis thaliana (Mouse-ear cress).